A 1021-amino-acid polypeptide reads, in one-letter code: Contactin-1 (1021 aa).

A signal peptide spans 1-20 (MKTPLLVSHLLLISLTSCLG). 6 Ig-like C2-type domains span residues 41–131 (PIFE…ATLS), 137–223 (PFPP…KSVF), 241–326 (PADI…ARIY), 331–407 (PEWV…AELK), 413–500 (PTFE…GTLV), and 504–603 (PTRI…LVVR). Cystine bridges form between Cys65/Cys114 and Cys158/Cys211. N-linked (GlcNAc...) asparagine glycosylation is found at Asn208 and Asn258. Cys263 and Cys310 are oxidised to a cystine. The N-linked (GlcNAc...) asparagine glycan is linked to Asn338. 2 disulfide bridges follow: Cys352–Cys391 and Cys436–Cys484. N-linked (GlcNAc...) asparagine glycans are attached at residues Asn457, Asn473, Asn494, and Asn521. Cys526 and Cys585 are joined by a disulfide. N-linked (GlcNAc...) asparagine glycosylation occurs at Asn593. Fibronectin type-III domains are found at residues 608-706 (PPGG…TDGA), 711-808 (APSD…SAQD), 813-908 (APTE…APPS), and 909-1002 (QPPR…TLSS). A disordered region spans residues 695-719 (SIPSNRIKTDGAAPNVAPSDVGGGG). An N-linked (GlcNAc...) asparagine glycan is attached at Asn935. Ser1001 carries GPI-anchor amidated serine lipidation. A propeptide spans 1002-1021 (SGLLSLLLPSLGFLVFYSEF) (removed in mature form).

This sequence belongs to the immunoglobulin superfamily. Contactin family. As to quaternary structure, monomer. Interacts with NOTCH1. Interacts with CNTNAP1 in cis form and TNR. Binds to the carbonic-anhydrase like domain of PTPRZ1. Detected in a complex with NRCAM and PTPRB. Interacts with TASOR. Expressed by neurons, oligodendrocytes and their progenitors (at protein level). Myelination regulates the expression being down-regulated when neurons are in contact with Schwann cells.

The protein localises to the cell membrane. Functionally, contactins mediate cell surface interactions during nervous system development. Involved in the formation of paranodal axo-glial junctions in myelinated peripheral nerves and in the signaling between axons and myelinating glial cells via its association with CNTNAP1. Participates in oligodendrocytes generation by acting as a ligand of NOTCH1. Its association with NOTCH1 promotes NOTCH1 activation through the released notch intracellular domain (NICD) and subsequent translocation to the nucleus. Interaction with TNR induces a repulsion of neurons and an inhibition of neurite outgrowth. The chain is Contactin-1 (Cntn1) from Rattus norvegicus (Rat).